A 460-amino-acid chain; its full sequence is ATP synthase subunit beta (460 aa).

150 to 157 (GGAGVGKT) is an ATP binding site.

This sequence belongs to the ATPase alpha/beta chains family. In terms of assembly, F-type ATPases have 2 components, CF(1) - the catalytic core - and CF(0) - the membrane proton channel. CF(1) has five subunits: alpha(3), beta(3), gamma(1), delta(1), epsilon(1). CF(0) has three main subunits: a(1), b(2) and c(9-12). The alpha and beta chains form an alternating ring which encloses part of the gamma chain. CF(1) is attached to CF(0) by a central stalk formed by the gamma and epsilon chains, while a peripheral stalk is formed by the delta and b chains.

The protein resides in the cell inner membrane. The enzyme catalyses ATP + H2O + 4 H(+)(in) = ADP + phosphate + 5 H(+)(out). Functionally, produces ATP from ADP in the presence of a proton gradient across the membrane. The catalytic sites are hosted primarily by the beta subunits. This chain is ATP synthase subunit beta, found in Enterobacter sp. (strain 638).